Here is a 346-residue protein sequence, read N- to C-terminus: MAHRPRWTLSQVTELFEKPLLDLLFEAQQVHRQHFDPRQVQVSTLLSIKTGACPEDCKYCPQSSRYKTGLEAERLMEVEQVLESARKAKAAGSTRFCMGAAWKNPHERDMPYLEQMVQGVKAMGLEACMTLGTLSESQAQRLANAGLDYYNHNLDTSPEFYGNIITTRTYQERLDTLEKVRDAGIKVCSGGIVGLGETVKDRAGLLLQLANLPTPPESVPINMLVKVKGTPLADNDDVDAFDFIRTIAVARIMMPTSYVRLSAGREQMNEQTQAMCFVAGANSIFYGCKLLTTPNPEEDKDLQLFRKLGLNPQQTAVLAGDNEQQQRLEQALMTPDTDEYYNAAAL.

Positions 38–256 (RQVQVSTLLS…IAVARIMMPT (219 aa)) constitute a Radical SAM core domain. 3 residues coordinate [4Fe-4S] cluster: Cys53, Cys57, and Cys60. [2Fe-2S] cluster-binding residues include Cys97, Cys128, Cys188, and Arg260.

This sequence belongs to the radical SAM superfamily. Biotin synthase family. As to quaternary structure, homodimer. The cofactor is [4Fe-4S] cluster. Requires [2Fe-2S] cluster as cofactor.

The catalysed reaction is (4R,5S)-dethiobiotin + (sulfur carrier)-SH + 2 reduced [2Fe-2S]-[ferredoxin] + 2 S-adenosyl-L-methionine = (sulfur carrier)-H + biotin + 2 5'-deoxyadenosine + 2 L-methionine + 2 oxidized [2Fe-2S]-[ferredoxin]. It functions in the pathway cofactor biosynthesis; biotin biosynthesis; biotin from 7,8-diaminononanoate: step 2/2. Its function is as follows. Catalyzes the conversion of dethiobiotin (DTB) to biotin by the insertion of a sulfur atom into dethiobiotin via a radical-based mechanism. The chain is Biotin synthase from Shigella dysenteriae serotype 1 (strain Sd197).